The following is a 394-amino-acid chain: Putative 8-amino-7-oxononanoate synthase (394 aa).

A substrate-binding site is contributed by arginine 30. 117 to 118 (GY) provides a ligand contact to pyridoxal 5'-phosphate. Histidine 142 contacts substrate. Residues serine 190, 215–218 (DEAH), and 246–249 (TLSK) contribute to the pyridoxal 5'-phosphate site. N6-(pyridoxal phosphate)lysine is present on lysine 249. Threonine 364 is a binding site for substrate.

It belongs to the class-II pyridoxal-phosphate-dependent aminotransferase family. BioF subfamily. Homodimer. The cofactor is pyridoxal 5'-phosphate.

It catalyses the reaction 6-carboxyhexanoyl-[ACP] + L-alanine + H(+) = (8S)-8-amino-7-oxononanoate + holo-[ACP] + CO2. The protein operates within cofactor biosynthesis; biotin biosynthesis. In terms of biological role, catalyzes the decarboxylative condensation of pimeloyl-[acyl-carrier protein] and L-alanine to produce 8-amino-7-oxononanoate (AON), [acyl-carrier protein], and carbon dioxide. The chain is Putative 8-amino-7-oxononanoate synthase (bioF) from Nostoc punctiforme (strain ATCC 29133 / PCC 73102).